The primary structure comprises 126 residues: Fluoride-specific ion channel FluC 1 (126 aa).

The next 4 membrane-spanning stretches (helical) occupy residues 5-25, 39-59, 69-89, and 100-120; these read FILAVAAGGSLGSVARYLVGI, TLFINITGSLLIGLFAGLFAI, IFLIVGICGGYTTFSTFSLDS, and AAGAYMIASVVLSVGALIAGI. Na(+) contacts are provided by glycine 77 and threonine 80.

Belongs to the fluoride channel Fluc/FEX (TC 1.A.43) family.

The protein resides in the cell inner membrane. The catalysed reaction is fluoride(in) = fluoride(out). Its activity is regulated as follows. Na(+) is not transported, but it plays an essential structural role and its presence is essential for fluoride channel function. Its function is as follows. Fluoride-specific ion channel. Important for reducing fluoride concentration in the cell, thus reducing its toxicity. This chain is Fluoride-specific ion channel FluC 1, found in Nitrobacter hamburgensis (strain DSM 10229 / NCIMB 13809 / X14).